Reading from the N-terminus, the 699-residue chain is Elongation factor G (699 aa).

The tr-type G domain maps to 8-286 (EKLRNIGIVA…AVIVTYPLPI (279 aa)). GTP-binding positions include 17–24 (AHIDAGKT), 84–88 (DTPGH), and 138–141 (NKMD).

The protein belongs to the TRAFAC class translation factor GTPase superfamily. Classic translation factor GTPase family. EF-G/EF-2 subfamily.

It is found in the cytoplasm. Functionally, catalyzes the GTP-dependent ribosomal translocation step during translation elongation. During this step, the ribosome changes from the pre-translocational (PRE) to the post-translocational (POST) state as the newly formed A-site-bound peptidyl-tRNA and P-site-bound deacylated tRNA move to the P and E sites, respectively. Catalyzes the coordinated movement of the two tRNA molecules, the mRNA and conformational changes in the ribosome. This chain is Elongation factor G (fusA), found in Aquifex pyrophilus.